The following is a 425-amino-acid chain: Serine--tRNA ligase (425 aa).

Disordered regions lie at residues 43 to 68 (QRSS…GSDP) and 108 to 131 (LPNL…RHCW). Positions 117 to 131 (PEGRDENDNQERHCW) are enriched in basic and acidic residues. 233-235 (TAE) lines the L-serine pocket. An ATP-binding site is contributed by 264–266 (RRE). L-serine is bound at residue Glu287. Residue 351-354 (EISS) participates in ATP binding. Ser385 contributes to the L-serine binding site.

It belongs to the class-II aminoacyl-tRNA synthetase family. Type-1 seryl-tRNA synthetase subfamily. In terms of assembly, homodimer. The tRNA molecule binds across the dimer.

It is found in the cytoplasm. The catalysed reaction is tRNA(Ser) + L-serine + ATP = L-seryl-tRNA(Ser) + AMP + diphosphate + H(+). It catalyses the reaction tRNA(Sec) + L-serine + ATP = L-seryl-tRNA(Sec) + AMP + diphosphate + H(+). Its pathway is aminoacyl-tRNA biosynthesis; selenocysteinyl-tRNA(Sec) biosynthesis; L-seryl-tRNA(Sec) from L-serine and tRNA(Sec): step 1/1. Catalyzes the attachment of serine to tRNA(Ser). Is also able to aminoacylate tRNA(Sec) with serine, to form the misacylated tRNA L-seryl-tRNA(Sec), which will be further converted into selenocysteinyl-tRNA(Sec). This Prochlorococcus marinus (strain MIT 9303) protein is Serine--tRNA ligase.